The sequence spans 1111 residues: Histone deacetylase 5 (1111 aa).

A Glycyl lysine isopeptide (Lys-Gly) (interchain with G-Cter in SUMO2) cross-link involves residue lysine 35. Disordered regions lie at residues 40–63 (GAMPSSMGGGGGGSPSPVELRGAL), 107–136 (RQHEVQLQKHLKQQQEMLAAKRQQELEQQR), and 187–272 (KEPT…SSPL). Residues 238-249 (DSRDDFPLRKTA) show a composition bias toward basic and acidic residues. Serine 250 carries the phosphoserine; by AMPK, CaMK1, SIK1 and PKD/PRKD1 modification. Residues 263 to 272 (KVAERRSSPL) are compositionally biased toward basic and acidic residues. Threonine 283 is modified (phosphothreonine; by PKC). A disordered region spans residues 474–495 (TVGKLPRHRPLSRTQSSPLPQS). Residues 485 to 495 (SRTQSSPLPQS) are compositionally biased toward low complexity. Serine 489 is modified (phosphoserine; by AMPK, CaMK1, SIK1 and PKD/PRKD1). Lysine 524 bears the N6-acetyllysine mark. 2 disordered regions span residues 527–611 (TKTG…LEES) and 645–666 (LGRTQSSPAAPGSMKSPPDQPT). A compositionally biased stretch (acidic residues) spans 572 to 610 (STQEDLEEEEDEEEEDEDCIQVKDEEGESGPDEGPDLEE). 2 positions are modified to phosphoserine: serine 600 and serine 650. The segment at 671-1017 (TTGVVYDTFM…VSALLSVELQ (347 aa)) is histone deacetylase. 4 residues coordinate Zn(2+): cysteine 685, cysteine 687, histidine 693, and cysteine 770. The active site involves histidine 822. Residues 1070–1109 (EEAETVSAMALLSVGAEQAQAVATQEHSPRPAEEPMEQEP) carry the Nuclear export signal motif. The tract at residues 1086-1111 (EQAQAVATQEHSPRPAEEPMEQEPTL) is disordered. Serine 1097 bears the Phosphoserine mark.

It belongs to the histone deacetylase family. HD type 2 subfamily. Interacts with AHRR, BAHD1, BCOR, HDAC7, HDAC9, CTBP1, MEF2C, NCOR2, NRIP1, PHB2 and a 14-3-3 chaperone protein. Interacts with BCL6, DDIT3/CHOP, GRK5, KDM5B and MYOCD. Interacts with EP300 in the presence of TFAP2C. Interacts with ANKRA2. Interacts with CUL7 (as part of the 3M complex); negatively regulated by ANKRA2. Interacts with ZBTB7B; the interaction allows the recruitment of HDAC4 on CD8 loci for deacetylation and possible inhibition of CD8 genes expression. Interacts with RARA. Post-translationally, phosphorylated by AMPK, CaMK1, SIK1 and PRKD1 at Ser-250 and Ser-489. The phosphorylation is required for the export to the cytoplasm and inhibition. Phosphorylated by the PKC kinases PKN1 and PKN2, impairing nuclear import. Phosphorylated by GRK5, leading to nuclear export of HDAC5 and allowing MEF2-mediated transcription. In terms of processing, ubiquitinated. Polyubiquitination however does not lead to its degradation.

The protein localises to the nucleus. It localises to the cytoplasm. It carries out the reaction N(6)-acetyl-L-lysyl-[histone] + H2O = L-lysyl-[histone] + acetate. Functionally, responsible for the deacetylation of lysine residues on the N-terminal part of the core histones (H2A, H2B, H3 and H4). Histone deacetylation gives a tag for epigenetic repression and plays an important role in transcriptional regulation, cell cycle progression and developmental events. Histone deacetylases act via the formation of large multiprotein complexes. Involved in muscle maturation by repressing transcription of myocyte enhancer MEF2C. During muscle differentiation, it shuttles into the cytoplasm, allowing the expression of myocyte enhancer factors. Serves as a corepressor of RARA and causes its deacetylation. In association with RARA, plays a role in the repression of microRNA-10a and thereby in the inflammatory response. The protein is Histone deacetylase 5 (HDAC5) of Cricetulus griseus (Chinese hamster).